Here is an 883-residue protein sequence, read N- to C-terminus: Protein P (883 aa).

A terminal protein domain (TP) region spans residues 1-183 (MHPFSRLFRN…GKPYSWEHRQ (183 aa)). The tract at residues 184–386 (LVQHNGQQHK…YCIHHIVSSL (203 aa)) is spacer. The tract at residues 298-344 (RNSGHTTWFSSASNSNKSRSREKAYSSNSTSKRYSPPLNYEKSDFSS) is disordered. The tract at residues 387-728 (DDWGPCTVTG…YEELWPVVRQ (342 aa)) is polymerase/reverse transcriptase domain (RT). In terms of domain architecture, Reverse transcriptase spans 397–638 (DVTIKSPRTP…NHLHFMGYVI (242 aa)). Residues aspartate 469, aspartate 589, and aspartate 590 each contribute to the Mg(2+) site.

The protein belongs to the hepadnaviridae P protein family.

It catalyses the reaction DNA(n) + a 2'-deoxyribonucleoside 5'-triphosphate = DNA(n+1) + diphosphate. It carries out the reaction Endonucleolytic cleavage to 5'-phosphomonoester.. With respect to regulation, activated by host HSP70 and HSP40 in vitro to be able to bind the epsilon loop of the pgRNA. Because deletion of the RNase H region renders the protein partly chaperone-independent, the chaperones may be needed indirectly to relieve occlusion of the RNA-binding site by this domain. Inhibited by several reverse-transcriptase inhibitors: Lamivudine, Adefovir and Entecavir. Multifunctional enzyme that converts the viral RNA genome into dsDNA in viral cytoplasmic capsids. This enzyme displays a DNA polymerase activity that can copy either DNA or RNA templates, and a ribonuclease H (RNase H) activity that cleaves the RNA strand of RNA-DNA heteroduplexes in a partially processive 3'- to 5'-endonucleasic mode. Neo-synthesized pregenomic RNA (pgRNA) are encapsidated together with the P protein, and reverse-transcribed inside the nucleocapsid. Initiation of reverse-transcription occurs first by binding the epsilon loop on the pgRNA genome, and is initiated by protein priming, thereby the 5'-end of (-)DNA is covalently linked to P protein. Partial (+)DNA is synthesized from the (-)DNA template and generates the relaxed circular DNA (RC-DNA) genome. After budding and infection, the RC-DNA migrates in the nucleus, and is converted into a plasmid-like covalently closed circular DNA (cccDNA). The activity of P protein does not seem to be necessary for cccDNA generation, and is presumably released from (+)DNA by host nuclear DNA repair machinery. This chain is Protein P, found in Woodchuck hepatitis B virus (isolate 2) (WHV).